Here is a 377-residue protein sequence, read N- to C-terminus: Dehydrogenase/reductase SDR family member 13 (377 aa).

Residues 1–25 form the signal peptide; it reads MEALLLGAGLLLGAYVLVYYNLVKA. Residues serine 46 and isoleucine 48 each contribute to the NAD(+) site. Position 170 (serine 170) interacts with substrate. Residues tyrosine 197, lysine 201, and serine 232 each contribute to the NAD(+) site. Tyrosine 197 acts as the Proton acceptor in catalysis. Positions 309 to 377 are disordered; sequence RLAGLGPGED…AKVEPEIQLS (69 aa). Over residues 317–331 the composition is skewed to acidic residues; it reads EDAEPDEDPQSEDSE. A compositionally biased stretch (low complexity) spans 347 to 357; sequence SQPYPSPQSSP. The span at 368-377 shows a compositional bias: basic and acidic residues; sequence AKVEPEIQLS.

This sequence belongs to the short-chain dehydrogenases/reductases (SDR) family.

It localises to the secreted. Functionally, putative oxidoreductase. The sequence is that of Dehydrogenase/reductase SDR family member 13 from Homo sapiens (Human).